The primary structure comprises 222 residues: Large ribosomal subunit protein uL11c (222 aa).

The disordered stretch occupies residues 1–20 (MASSSLSTLCSSTSSSLHPN). A chloroplast-targeting transit peptide spans 1-62 (MASSSLSTLC…TPRFLTVIAM (62 aa)).

Belongs to the universal ribosomal protein uL11 family. Part of the ribosomal stalk of the 50S ribosomal subunit. Interacts with L10 and the large rRNA to form the base of the stalk. L10 forms an elongated spine to which L12 dimers bind in a sequential fashion forming a multimeric L10(L12)X complex.

It localises to the plastid. Its subcellular location is the chloroplast. In terms of biological role, forms part of the ribosomal stalk which helps the ribosome interact with GTP-bound translation factors. This is Large ribosomal subunit protein uL11c (RPL11) from Arabidopsis thaliana (Mouse-ear cress).